A 92-amino-acid chain; its full sequence is Small ribosomal subunit protein uS15 (92 aa).

The protein belongs to the universal ribosomal protein uS15 family. Part of the 30S ribosomal subunit. Forms a bridge to the 50S subunit in the 70S ribosome, contacting the 23S rRNA.

Its function is as follows. One of the primary rRNA binding proteins, it binds directly to 16S rRNA where it helps nucleate assembly of the platform of the 30S subunit by binding and bridging several RNA helices of the 16S rRNA. In terms of biological role, forms an intersubunit bridge (bridge B4) with the 23S rRNA of the 50S subunit in the ribosome. The polypeptide is Small ribosomal subunit protein uS15 (Symbiobacterium thermophilum (strain DSM 24528 / JCM 14929 / IAM 14863 / T)).